A 191-amino-acid chain; its full sequence is Calcium and integrin-binding protein 1 (191 aa).

Residue Gly2 is the site of N-myristoyl glycine attachment. EF-hand domains lie at 103 to 138 and 148 to 183; these read TPDI…LTGE and EMKQ…SPDF. Ca(2+) is bound by residues Asp116, Asp118, Asp120, Thr122, Asp127, Asp161, Asp163, Asp165, Thr167, and Glu172.

As to quaternary structure, monomer. Interacts with the heterodimeric integrin alpha-IIb/beta3 (ITGA2B-ITGB3). Interacts with ITGA2B (via cytoplasmic domain); the interaction is direct and calcium-dependent. Interacts with the protein kinases PLK2/SNK and PRKDC (via the region immediately upstream of the kinase domain). Interacts with PLK3; the interaction inhibits PLK3 kinase activity. Interacts with PSEN2. Interacts (via C-terminus) with F8. Interacts with NBR1 (via C-terminus). Interacts with FEZ1 (via C-terminus). Interacts with UBR5 (via C-terminus); the interaction is sensitive to DNA damage, and may target CIB1 for ubiquitin-mediated degradation. Interacts with IFI6; the interaction is direct. Interacts with BCL2. Interacts with TAS1R2 (via C-terminus); the interaction is independent of the myristoylation state of CIB1. Interacts with ITPR3; the interaction occurs in a calcium dependent manner. Interacts with PTK2/FAK1. Interacts with MAP3K5; the interaction inhibits MAP3K5 activation by phosphorylation, and its subsequent interaction with TRAF2. Interacts (via C-terminal region) with STMN2 (via the N-terminal region); the interaction is direct, occurs in a calcium-dependent manner and attenuates the STMN2-induced neurite outgrowth inhibition. Interacts with SPHK1, the interaction occurs in a calcium-dependent manner. Interacts with ITGA2B (via C-terminal cytoplasmic tail); the interaction occurs upon platelet aggregation and is stabilized/increased in a calcium and magnesium-dependent manner. Interacts with PAK1 (via N-terminal region); the interaction is direct and occurs in a calcium-dependent manner. Interacts with RAC3 (via C-terminal region); the interaction induces their association with the cytoskeleton upon alpha-IIb/beta3 integrin-mediated adhesion. Interacts with ITGA5 and ITGAV. Interacts with MYO1C. Interacts with ITGA2B (via C-terminal cytoplasmic tail region). Interacts (via C-terminal region) with PPP3R1 isoform 1 and isoform 2; the interactions increase upon cardiomyocytes hypertrophy. Interacts with CACNA1C; the interaction increases upon cardiomyocytes hypertrophy. Interacts and forms a complex with TMC6 and TMC8; the interaction stabilizes each component of the complex. In terms of tissue distribution, expressed strongly in Sertoli cells, weakly in pachytene spermatocytes, round spermatids and condensing spermatids (at protein level). Expressed in testis. Expressed in cardiac myocytes and endothelial cells. Expressed in heart, liver, spleen, lung, kidney, brain and inner ear. In the inner ear, expressed in the vestibule, basilar membrane and spiral ganglion cells.

It is found in the membrane. Its subcellular location is the cell membrane. The protein localises to the sarcolemma. The protein resides in the apical cell membrane. It localises to the cell projection. It is found in the ruffle membrane. Its subcellular location is the filopodium tip. The protein localises to the growth cone. The protein resides in the lamellipodium. It localises to the cytoplasm. It is found in the cytoskeleton. Its subcellular location is the microtubule organizing center. The protein localises to the centrosome. The protein resides in the perinuclear region. It localises to the nucleus. It is found in the neuron projection. Its subcellular location is the perikaryon. In terms of biological role, calcium-binding protein that plays a role in the regulation of numerous cellular processes, such as cell differentiation, cell division, cell proliferation, cell migration, thrombosis, angiogenesis, cardiac hypertrophy and apoptosis. Involved in bone marrow megakaryocyte differentiation by negatively regulating thrombopoietin-mediated signaling pathway. Participates in the endomitotic cell cycle of megakaryocyte, a form of mitosis in which both karyokinesis and cytokinesis are interrupted. Plays a role in integrin signaling by negatively regulating alpha-IIb/beta3 activation in thrombin-stimulated megakaryocytes preventing platelet aggregation. Up-regulates PTK2/FAK1 activity, and is also needed for the recruitment of PTK2/FAK1 to focal adhesions; it thus appears to play an important role in focal adhesion formation. Positively regulates cell migration on fibronectin in a CDC42-dependent manner, the effect being negatively regulated by PAK1. Functions as a negative regulator of stress activated MAP kinase (MAPK) signaling pathways. Down-regulates inositol 1,4,5-trisphosphate receptor-dependent calcium signaling. Involved in sphingosine kinase SPHK1 translocation to the plasma membrane in a N-myristoylation-dependent manner preventing TNF-alpha-induced apoptosis. Regulates serine/threonine-protein kinase PLK3 activity for proper completion of cell division progression. Plays a role in microtubule (MT) dynamics during neuronal development; disrupts the MT depolymerization activity of STMN2 attenuating NGF-induced neurite outgrowth and the MT reorganization at the edge of lamellipodia. Promotes cardiomyocyte hypertrophy via activation of the calcineurin/NFAT signaling pathway. Stimulates calcineurin PPP3R1 activity by mediating its anchoring to the sarcolemma. In ischemia-induced (pathological or adaptive) angiogenesis, stimulates endothelial cell proliferation, migration and microvessel formation by activating the PAK1 and ERK1/ERK2 signaling pathway. Also promotes cancer cell survival and proliferation. May regulate cell cycle and differentiation of spermatogenic germ cells, and/or differentiation of supporting Sertoli cells. Forms a complex with TMC6/EVER1 and TMC8/EVER2 in lymphocytes and keratynocytes where CIB1 stabilizes TMC6 and TMC8 levels and reciprocally. This Mus musculus (Mouse) protein is Calcium and integrin-binding protein 1 (Cib1).